Reading from the N-terminus, the 411-residue chain is Serine hydroxymethyltransferase (411 aa).

(6S)-5,6,7,8-tetrahydrofolate-binding positions include Leu-119 and 123 to 125; that span reads GHL. The residue at position 228 (Lys-228) is an N6-(pyridoxal phosphate)lysine. 351 to 353 is a binding site for (6S)-5,6,7,8-tetrahydrofolate; it reads SPF.

This sequence belongs to the SHMT family. As to quaternary structure, homodimer. It depends on pyridoxal 5'-phosphate as a cofactor.

The protein localises to the cytoplasm. It catalyses the reaction (6R)-5,10-methylene-5,6,7,8-tetrahydrofolate + glycine + H2O = (6S)-5,6,7,8-tetrahydrofolate + L-serine. The protein operates within one-carbon metabolism; tetrahydrofolate interconversion. It functions in the pathway amino-acid biosynthesis; glycine biosynthesis; glycine from L-serine: step 1/1. In terms of biological role, catalyzes the reversible interconversion of serine and glycine with tetrahydrofolate (THF) serving as the one-carbon carrier. This reaction serves as the major source of one-carbon groups required for the biosynthesis of purines, thymidylate, methionine, and other important biomolecules. Also exhibits THF-independent aldolase activity toward beta-hydroxyamino acids, producing glycine and aldehydes, via a retro-aldol mechanism. The sequence is that of Serine hydroxymethyltransferase from Clostridium botulinum (strain Eklund 17B / Type B).